A 49-amino-acid polypeptide reads, in one-letter code: DNA-directed RNA polymerase subunit Rpo12 (49 aa).

Cys-11, Cys-27, and Cys-30 together coordinate Zn(2+).

This sequence belongs to the archaeal Rpo12/eukaryotic RPC10 RNA polymerase subunit family. Part of the RNA polymerase complex. Requires Zn(2+) as cofactor.

The protein localises to the cytoplasm. It carries out the reaction RNA(n) + a ribonucleoside 5'-triphosphate = RNA(n+1) + diphosphate. Its function is as follows. DNA-dependent RNA polymerase (RNAP) catalyzes the transcription of DNA into RNA using the four ribonucleoside triphosphates as substrates. The chain is DNA-directed RNA polymerase subunit Rpo12 from Thermococcus onnurineus (strain NA1).